Here is a 173-residue protein sequence, read N- to C-terminus: Protein GrpE (173 aa).

The protein belongs to the GrpE family. Homodimer.

The protein localises to the cytoplasm. In terms of biological role, participates actively in the response to hyperosmotic and heat shock by preventing the aggregation of stress-denatured proteins, in association with DnaK and GrpE. It is the nucleotide exchange factor for DnaK and may function as a thermosensor. Unfolded proteins bind initially to DnaJ; upon interaction with the DnaJ-bound protein, DnaK hydrolyzes its bound ATP, resulting in the formation of a stable complex. GrpE releases ADP from DnaK; ATP binding to DnaK triggers the release of the substrate protein, thus completing the reaction cycle. Several rounds of ATP-dependent interactions between DnaJ, DnaK and GrpE are required for fully efficient folding. This chain is Protein GrpE, found in Campylobacter fetus subsp. fetus (strain 82-40).